Here is a 533-residue protein sequence, read N- to C-terminus: Probable G-protein coupled receptor Mth-like 14 (533 aa).

The first 23 residues, 1 to 23, serve as a signal peptide directing secretion; it reads MNLGHWNFLLALISLQTFFNASA. 5 N-linked (GlcNAc...) asparagine glycosylation sites follow: asparagine 20, asparagine 29, asparagine 30, asparagine 36, and asparagine 47. At 24–242 the chain is on the extracellular side; sequence QISTVNNSSK…QVEEQIAFAK (219 aa). The segment at 86-108 is disordered; that stretch reads VQSPVDNPLDPADCSQREKYRKQ. Cysteine 120 and cysteine 216 are joined by a disulfide. 3 N-linked (GlcNAc...) asparagine glycosylation sites follow: asparagine 133, asparagine 178, and asparagine 206. A helical membrane pass occupies residues 243–263; it reads VVFVAVLMLISMPCLLLVSYL. At 264–279 the chain is on the cytoplasmic side; the sequence is HMTLRLLRNLHGLSLS. The helical transmembrane segment at 280–300 threads the bilayer; the sequence is LMSLCLASGYFVHSVVHIYGI. At 301–303 the chain is on the extracellular side; the sequence is PNQ. The helical transmembrane segment at 304-324 threads the bilayer; that stretch reads GFIGYVIQFCILSYFFWYLCI. The Cytoplasmic segment spans residues 325 to 347; the sequence is CFNVLLNVWYKLPCCIQCSKSWA. Residues 348-368 traverse the membrane as a helical segment; it reads TFNFACYAVFAFSGPATIVAL. Residues 369–395 lie on the Extracellular side of the membrane; that stretch reads TVQKGLPGMPSYFLQGLTESIRDSQRY. A helical membrane pass occupies residues 396–416; that stretch reads FIPPVSTILFLSFLLNIISFF. At 417-451 the chain is on the cytoplasmic side; that stretch reads GFQRISGYAKAEKNIQERKCLFDQQKYEDVKKDAK. The chain crosses the membrane as a helical span at residues 452 to 472; it reads CVSLLGIIMVVSWLLEIITFY. The Extracellular segment spans residues 473–480; that stretch reads SGSNSNYL. A helical membrane pass occupies residues 481–501; that stretch reads ILCDMVNGLQGVWVLLIFLVV. At 502-533 the chain is on the cytoplasmic side; the sequence is RRRRTIILRWWYDRGSHEIEGTELQALSNSPT.

Belongs to the G-protein coupled receptor 2 family. Mth subfamily.

The protein resides in the cell membrane. The protein is Probable G-protein coupled receptor Mth-like 14 (mthl14) of Drosophila melanogaster (Fruit fly).